The primary structure comprises 880 residues: uncharacterized protein (880 aa).

Disordered stretches follow at residues 101–149 (KPIP…LRSE), 191–224 (PETS…ISTH), 240–273 (TTTT…PILK), 294–350 (NSNS…STTS), 425–446 (QPDS…ESQP), 470–508 (STST…SSSS), 536–561 (MESS…NDNS), 580–613 (APQS…NDDE), 682–713 (NTNT…NINN), and 844–880 (NSSG…KSEI). Residues 113-147 (ISIKEKEKEKEKEKEKEKEKEKEKEKEMKSTINLR) are a coiled coil. The segment covering 115–149 (IKEKEKEKEKEKEKEKEKEKEKEKEMKSTINLRSE) has biased composition (basic and acidic residues). 2 stretches are compositionally biased toward low complexity: residues 193–223 (TSTP…SIST) and 240–256 (TTTT…PSSS). The segment covering 257–271 (IAGITNPTSRSSSPI) has biased composition (polar residues). Residues 294–332 (NSNSSSGGGNNNNKSISTPSSPIISRPITNKINNNNNNN) are compositionally biased toward low complexity. Residues 333–342 (QPQLHYNQPQ) are compositionally biased toward polar residues. The span at 536–548 (MESSTTTTLLSEN) shows a compositional bias: low complexity. The segment covering 589–613 (QPEDDPFFDFEDLSDDDDSNDNDDE) has biased composition (acidic residues). The segment covering 844–864 (NSSGSGNNSNDNSGSSSPSSS) has biased composition (low complexity). Residues 865–880 (KTNTLNQQSICIKSEI) show a composition bias toward polar residues.

This is an uncharacterized protein from Dictyostelium discoideum (Social amoeba).